We begin with the raw amino-acid sequence, 378 residues long: Anhydro-N-acetylmuramic acid kinase (378 aa).

9 to 16 (GTSADGID) contributes to the ATP binding site.

Belongs to the anhydro-N-acetylmuramic acid kinase family.

It carries out the reaction 1,6-anhydro-N-acetyl-beta-muramate + ATP + H2O = N-acetyl-D-muramate 6-phosphate + ADP + H(+). The protein operates within amino-sugar metabolism; 1,6-anhydro-N-acetylmuramate degradation. It participates in cell wall biogenesis; peptidoglycan recycling. In terms of biological role, catalyzes the specific phosphorylation of 1,6-anhydro-N-acetylmuramic acid (anhMurNAc) with the simultaneous cleavage of the 1,6-anhydro ring, generating MurNAc-6-P. Is required for the utilization of anhMurNAc either imported from the medium or derived from its own cell wall murein, and thus plays a role in cell wall recycling. The sequence is that of Anhydro-N-acetylmuramic acid kinase from Prochlorococcus marinus (strain NATL1A).